Here is a 582-residue protein sequence, read N- to C-terminus: Sodium-dependent low-affinity dicarboxylate transporter 1 (582 aa).

The next 12 helical transmembrane spans lie at 17 to 37 (SFVIWGALLIFSPLLMFVGDS), 59 to 79 (ALPLAITAFIPMILFPLFGIM), 87 to 107 (AYLPDTCFLFMGGLMVALAVE), 130 to 150 (VMAGFMGVTGFLSMWISNTAT), 224 to 244 (LMLSVCFSANIGGAATITGTA), 271 to 291 (IFAFPMVFCCLIYCWCVLYLL), 317 to 337 (FSFAEMAVIFCFALLLVLWIL), 353 to 373 (EFVSDATSAMFIVILLFTLPE), 401 to 421 (FPWSVLFLLGGGFALAAGVKE), 455 to 475 (TNVCSNTVIASIFIPIVAELA), 482 to 502 (PLNFMLPVTISASFAFLLPVA), and 527 to 547 (VTLGCVVLSMLNMLLWAGFVF).

The protein belongs to the SLC13A/DASS transporter (TC 2.A.47) family. NADC subfamily. As to expression, nad-1 and nad-2 are coexpressed in the intestinal tract from early larvae to adults, expression is from the pharynx through to the anus. Expression level is significantly greater in the anterior half of the intestine than in the posterior half.

The protein resides in the membrane. In terms of biological role, low affinity sodium-dicarboxylate cotransporter that accepts a range of tricarboxylic acid-cycle intermediates with 4-5 carbon atoms. There is no interaction with monocarboxylates. The polypeptide is Sodium-dependent low-affinity dicarboxylate transporter 1 (nac-1) (Caenorhabditis elegans).